The chain runs to 220 residues: Phosphatidylserine decarboxylase proenzyme (220 aa).

Serine 189 functions as the Schiff-base intermediate with substrate; via pyruvic acid in the catalytic mechanism. A Pyruvic acid (Ser); by autocatalysis modification is found at serine 189.

This sequence belongs to the phosphatidylserine decarboxylase family. PSD-A subfamily. In terms of assembly, heterodimer of a large membrane-associated beta subunit and a small pyruvoyl-containing alpha subunit. Pyruvate is required as a cofactor. Post-translationally, is synthesized initially as an inactive proenzyme. Formation of the active enzyme involves a self-maturation process in which the active site pyruvoyl group is generated from an internal serine residue via an autocatalytic post-translational modification. Two non-identical subunits are generated from the proenzyme in this reaction, and the pyruvate is formed at the N-terminus of the alpha chain, which is derived from the carboxyl end of the proenzyme. The post-translation cleavage follows an unusual pathway, termed non-hydrolytic serinolysis, in which the side chain hydroxyl group of the serine supplies its oxygen atom to form the C-terminus of the beta chain, while the remainder of the serine residue undergoes an oxidative deamination to produce ammonia and the pyruvoyl prosthetic group on the alpha chain.

The protein localises to the cell membrane. It catalyses the reaction a 1,2-diacyl-sn-glycero-3-phospho-L-serine + H(+) = a 1,2-diacyl-sn-glycero-3-phosphoethanolamine + CO2. It functions in the pathway phospholipid metabolism; phosphatidylethanolamine biosynthesis; phosphatidylethanolamine from CDP-diacylglycerol: step 2/2. Its function is as follows. Catalyzes the formation of phosphatidylethanolamine (PtdEtn) from phosphatidylserine (PtdSer). The polypeptide is Phosphatidylserine decarboxylase proenzyme (Pelobacter propionicus (strain DSM 2379 / NBRC 103807 / OttBd1)).